A 442-amino-acid polypeptide reads, in one-letter code: Putative pyrimidine permease RutG (442 aa).

Residues 1–57 (MAMFGFPHWQLKSTSTESGVVAPDERLPFAQTAVMGVQHAVAMFGATVLMPILMGLD) lie on the Cytoplasmic side of the membrane. The helical transmembrane segment at 58–78 (PNLSILMSGIGTLLFFFITGG) threads the bilayer. A topological domain (periplasmic) is located at residue Arg-79. A helical membrane pass occupies residues 80-100 (VPSYLGSSAAFVGVVIAATGF). The Cytoplasmic portion of the chain corresponds to 101–110 (NGQGINPNIS). Residues 111–131 (IALGGIIACGLVYTVIGLVVM) form a helical membrane-spanning segment. Over 132-140 (KIGTRWIER) the chain is Periplasmic. A helical transmembrane segment spans residues 141 to 161 (LMPPVVTGAVVMAIGLNLAPI). Topologically, residues 162–169 (AVKSVSAS) are cytoplasmic. Residues 170 to 190 (AFDSWMAVMTVLCIGLVAVFT) form a helical membrane-spanning segment. The Periplasmic portion of the chain corresponds to 191 to 196 (RGMIQR). Residues 197–217 (LLILVGLIVACLLYGVMTNVL) form a helical membrane-spanning segment. The Cytoplasmic segment spans residues 218–240 (GLGKAVDFTLVSHAAWFGLPHFS). Residues 241–261 (TPAFNGQAMMLIAPVAVILVA) form a helical membrane-spanning segment. The Periplasmic portion of the chain corresponds to 262–284 (ENLGHLKAVAGMTGRNMDPYMGR). Residues 285–305 (AFVGDGLATMLSGSVGGSGVT) traverse the membrane as a helical segment. Residues 306–318 (TYAENIGVMAVTK) lie on the Cytoplasmic side of the membrane. The chain crosses the membrane as a helical span at residues 319 to 339 (VYSTLVFVAAAVIAMLLGFSP). At 340 to 347 (KFGALIHT) the chain is on the periplasmic side. The helical transmembrane segment at 348–368 (IPAAVIGGASIVVFGLIAVAG) threads the bilayer. At 369 to 385 (ARIWVQNRVDLSQNGNL) the chain is on the cytoplasmic side. Transmembrane regions (helical) follow at residues 386 to 406 (IMVAVTLVLGAGDFALTLGGF) and 407 to 427 (TLGGIGTATFGAILLNALLSR). Residues 428 to 442 (KLVDVPPPEVVHQEP) lie on the Cytoplasmic side of the membrane.

It belongs to the nucleobase:cation symporter-2 (NCS2) (TC 2.A.40) family.

It localises to the cell inner membrane. May function as a proton-driven pyrimidine uptake system. The chain is Putative pyrimidine permease RutG (rutG) from Escherichia coli (strain K12).